A 681-amino-acid polypeptide reads, in one-letter code: Propionyl-CoA carboxylase alpha chain (681 aa).

The Biotin carboxylation domain maps to 1-466 (MFNKILIANR…TTAFIAEEYP (466 aa)). ATP-binding positions include Lys-116, 148-209 (SNQI…PRHI), Glu-200, and Asn-235. In terms of domain architecture, ATP-grasp spans 120 to 317 (KKIAQEANVS…LVEQMIRVAA (198 aa)). Positions 275, 288, and 290 each coordinate Mg(2+). Positions 275, 288, and 290 each coordinate Mn(2+). Residue Glu-288 is part of the active site. A biotin-binding site is contributed by Phe-348. The Biotinyl-binding domain occupies 602–681 (LMPEKLPPDT…AVDDVIMEFE (80 aa)). The residue at position 647 (Lys-647) is an N6-biotinyllysine.

As to quaternary structure, the holoenzyme is a dodecamer composed of 6 PccA/alpha subunits and 6 PccB/beta subunits. Mg(2+) is required as a cofactor. It depends on Mn(2+) as a cofactor. Biotin serves as cofactor. In terms of processing, the biotin cofactor is covalently attached to the C-terminal biotinyl-binding domain and is required for the catalytic activity.

It carries out the reaction propanoyl-CoA + hydrogencarbonate + ATP = (S)-methylmalonyl-CoA + ADP + phosphate + H(+). Its pathway is metabolic intermediate metabolism; propanoyl-CoA degradation; succinyl-CoA from propanoyl-CoA: step 1/3. In terms of biological role, this is one of the 2 subunits of the biotin-dependent propionyl-CoA carboxylase (PCC), the enzyme catalyzing the carboxylation of propionyl-CoA/propanoyl-CoA to D-methylmalonyl-CoA/(S)-methylmalonyl-CoA. Within the holoenzyme, the alpha subunit catalyzes the ATP-dependent carboxylation of the biotin carried by the biotin carboxyl carrier (BCC) domain, while the beta subunit then tranfers the carboxyl group from carboxylated biotin to propionyl-CoA. The polypeptide is Propionyl-CoA carboxylase alpha chain (Ruegeria pomeroyi (strain ATCC 700808 / DSM 15171 / DSS-3) (Silicibacter pomeroyi)).